The chain runs to 290 residues: MDKIIKTISESGAFRAFVLDSTETVRTAQEKHQTQASSTVALGRTLIASQILAANEKGNTKLTVKVLGSSSLGAIITVADTKGNVKGYVQNPGVDIKKTATGEVLVGPFVGNGQFLVITDYGAGNPYNSITPLISGEIGEDLAFYLTESQQTPSAVGLNVLLDEEDKVKVAGGFLVQVLPGAKKEEIARFEKRIQEMPAISTLLESDDHIEALLKAIYGDEAYKRLSEEEIRFQCDCSHERFMNALASLPSSDLQEMKEEDHGVEITCQFCQTTYNFDEKDLEELIRDKS.

Disulfide bonds link Cys235-Cys237 and Cys268-Cys271.

Belongs to the HSP33 family. Post-translationally, under oxidizing conditions two disulfide bonds are formed involving the reactive cysteines. Under reducing conditions zinc is bound to the reactive cysteines and the protein is inactive.

It is found in the cytoplasm. Redox regulated molecular chaperone. Protects both thermally unfolding and oxidatively damaged proteins from irreversible aggregation. Plays an important role in the bacterial defense system toward oxidative stress. This is 33 kDa chaperonin from Streptococcus pneumoniae (strain JJA).